Reading from the N-terminus, the 767-residue chain is Transducin-like enhancer protein 1 (767 aa).

Disordered regions lie at residues 1–26 (MFPQ…PPQS) and 200–346 (ADAE…TSAS). Basic and acidic residues-rich tracts occupy residues 200–209 (ADAEHRERDP), 235–255 (RKTE…RSED), and 277–289 (NGVD…RKDP). The segment at 212 to 274 (SCLTLPNGER…SPHSVHSYSS (63 aa)) is CCN domain. Over residues 294–306 (PNSMTSSSSVSPS) the composition is skewed to low complexity. The span at 324 to 346 (LKSSTPNSQSDLNTPGPSGTSAS) shows a compositional bias: polar residues. WD repeat units lie at residues 467 to 498 (GIPR…HVYT), 525 to 555 (NRDN…SIWD), 569 to 599 (SSAP…VVWD), 611 to 641 (GHTD…RCWD), 693 to 723 (LHES…NAWR), and 734 to 764 (KESS…TVYE).

Belongs to the WD repeat Groucho/TLE family. In terms of processing, ubiquitinated by XIAP/BIRC4. In terms of tissue distribution, abundantly expressed in brain, lung, testis and ovary in comparison with liver, heart, kidney and spleen. Ubiquitously expressed in the developing embryo. Present in unfertilized and fertilized eggs.

The protein localises to the nucleus. Nuclear effector molecule. In Xenopus laevis (African clawed frog), this protein is Transducin-like enhancer protein 1 (esg1).